The sequence spans 292 residues: 4-amino-L-phenylalanine/4-methylamino-L-phenylalanine methyltransferase (292 aa).

Residue 128-132 (CAGPG) coordinates S-adenosyl-L-methionine.

The protein belongs to the protein N5-glutamine methyltransferase family.

It carries out the reaction 4-amino-L-phenylalanine + S-adenosyl-L-methionine = 4-methylamino-L-phenylalanine + S-adenosyl-L-homocysteine + H(+). The enzyme catalyses 4-methylamino-L-phenylalanine + S-adenosyl-L-methionine = 4-dimethylamino-L-phenylalanine + S-adenosyl-L-homocysteine + H(+). Its pathway is antibiotic biosynthesis. Functionally, involved in pristinamycin I biosynthesis. Catalyzes the SAM-dependent methylation of 4-amino-L-phenylalanine (PAPA) to 4-methylamino-L-phenylalanine (MMPAPA), and of MMPAPA to 4-dimethylamino-L-phenylalanine (DMPAPA). This Streptomyces pristinaespiralis protein is 4-amino-L-phenylalanine/4-methylamino-L-phenylalanine methyltransferase.